Here is a 991-residue protein sequence, read N- to C-terminus: Translation initiation factor IF-2 (991 aa).

Disordered stretches follow at residues 53–85 (SHGT…KART), 97–175 (VKRD…EAAE), and 312–395 (GIKG…DRGG). Composition is skewed to basic and acidic residues over residues 97–113 (VKRD…HDSQ) and 125–175 (ELQR…EAAE). Low complexity predominate over residues 323-338 (AAGAPAPGAAPGAAAK). Positions 339–349 (PGEKKSVKSEK) are enriched in basic and acidic residues. The tr-type G domain occupies 491 to 658 (PRPPVVTVMG…QVLLQAEVLE (168 aa)). The G1 stretch occupies residues 500 to 507 (GHVDHGKT). 500–507 (GHVDHGKT) is a GTP binding site. A G2 region spans residues 525–529 (GITQH). The G3 stretch occupies residues 546–549 (DTPG). Residues 546–550 (DTPGH) and 600–603 (NKID) contribute to the GTP site. The segment at 600-603 (NKID) is G4. Residues 636-638 (SAK) form a G5 region.

The protein belongs to the TRAFAC class translation factor GTPase superfamily. Classic translation factor GTPase family. IF-2 subfamily.

It is found in the cytoplasm. In terms of biological role, one of the essential components for the initiation of protein synthesis. Protects formylmethionyl-tRNA from spontaneous hydrolysis and promotes its binding to the 30S ribosomal subunits. Also involved in the hydrolysis of GTP during the formation of the 70S ribosomal complex. The chain is Translation initiation factor IF-2 from Leptothrix cholodnii (strain ATCC 51168 / LMG 8142 / SP-6) (Leptothrix discophora (strain SP-6)).